Reading from the N-terminus, the 422-residue chain is Interferon-induced protein 44 (422 aa).

One can recognise a TLDc domain in the interval 1–147; that stretch reads MAMRTRLTWQ…IQECEAFRCE (147 aa).

This sequence belongs to the IFI44 family.

It localises to the cytoplasm. In terms of biological role, this protein aggregates to form microtubular structures. The protein is Interferon-induced protein 44 (Ifi44) of Mus musculus (Mouse).